We begin with the raw amino-acid sequence, 250 residues long: MVKLAFGSVGDSFSVTSIKAYVAEFIATLLFVFAGVGSAIAFGQLTNGGALDPAGLVAIAVAHALALFVGVSVAANTSGGHLNPAVTFGLAVGGHITVLTGLFYWVAQLLGASVACLLLRFVTHGKAIPTHGVSGGTTELEGVVFEIVITFALVYTVYATAADPKKGSLGTIAPIAIGFIVGANILAAGPFSGGSMNPARSFGPAVAAADFAGNWVYWVGPLIGGGLAGLVYGDVFIGGSYQQVADQDYA.

2 helical membrane-spanning segments follow: residues 22 to 42 (VAEF…AIAF) and 54 to 74 (AGLV…VSVA). Positions 83–85 (NPA) match the NPA 1 motif. Helical transmembrane passes span 97–119 (TVLT…CLLL), 142–162 (GVVF…ATAA), and 169–189 (LGTI…LAAG). The short motif at 197 to 199 (NPA) is the NPA 2 element. Residues 218 to 238 (WVGPLIGGGLAGLVYGDVFIG) form a helical membrane-spanning segment.

It belongs to the MIP/aquaporin (TC 1.A.8) family. TIP (TC 1.A.8.10) subfamily.

The protein resides in the vacuole membrane. Its function is as follows. Aquaporins facilitate the transport of water and small neutral solutes across cell membranes. This is Aquaporin TIP2-2 (TIP2-2) from Zea mays (Maize).